A 233-amino-acid chain; its full sequence is MSACQTPLIVALDFPTREAALKLADQLDPALCRVKVGKELFTSSASGIVETLCDKGFEVFLDLKFHDIPNTTAMAVKAAAEMGVWMVNVHCSGGLRMMAACREELAKRSGPQPLLIGVTVLTSMEREDLAGIGLDVDPQEQVLRLAALAQKAGMDGLVCSALEAPALKAAHPSLQLVTPGIRPAGSAQDDQRRILTPRQALDAGSDYLVIGRPISQAADPAQALAAVVAEIRG.

Residues aspartate 13, lysine 35, 62 to 71 (DLKFHDIPNT), threonine 122, arginine 182, glutamine 191, glycine 211, and arginine 212 each bind substrate. The active-site Proton donor is the lysine 64.

Belongs to the OMP decarboxylase family. Type 1 subfamily. In terms of assembly, homodimer.

The catalysed reaction is orotidine 5'-phosphate + H(+) = UMP + CO2. Its pathway is pyrimidine metabolism; UMP biosynthesis via de novo pathway; UMP from orotate: step 2/2. Functionally, catalyzes the decarboxylation of orotidine 5'-monophosphate (OMP) to uridine 5'-monophosphate (UMP). This Pseudomonas putida (strain GB-1) protein is Orotidine 5'-phosphate decarboxylase.